The chain runs to 105 residues: uncharacterized protein (105 aa).

Transmembrane regions (helical) follow at residues 56–76 (ALIW…VLII) and 85–105 (INLN…GVFY).

The protein resides in the membrane. This is an uncharacterized protein from Aedes vexans (Inland floodwater mosquito).